Consider the following 666-residue polypeptide: Frizzled-3 (666 aa).

The N-terminal stretch at 1 to 22 (MAMTWIVFSLWPLTVFMGHIGG) is a signal peptide. The FZ domain occupies 23-136 (HSLFSCEPIT…CSRFPDCDEP (114 aa)). Over 23–205 (HSLFSCEPIT…REELSFARYF (183 aa)) the chain is Extracellular. 5 disulfide bridges follow: Cys28-Cys89, Cys36-Cys82, Cys73-Cys110, Cys99-Cys133, and Cys103-Cys127. Asn42 carries an N-linked (GlcNAc...) asparagine glycan. Residues 206–226 (IGLISIICLSATLFTFLTFLI) form a helical membrane-spanning segment. Over 227–237 (DVTRFRYPERP) the chain is Cytoplasmic. The chain crosses the membrane as a helical span at residues 238 to 258 (IIFYAVCYMMVSLIFFIGFLL). Residues 259-288 (EDRVACNASIPAQYKASTVTQGSHNKACTM) lie on the Extracellular side of the membrane. An N-linked (GlcNAc...) asparagine glycan is attached at Asn265. The chain crosses the membrane as a helical span at residues 289-309 (LFMILYFFTMAGSVWWVILTI). The Cytoplasmic portion of the chain corresponds to 310-328 (TWFLAAVPKWGSEAIEKKA). A helical transmembrane segment spans residues 329-349 (LLFHASAWGIPGTLTIILLAM). The Extracellular portion of the chain corresponds to 350-374 (NKIEGDNISGVCFVGLYDVDALRYF). Asn356 carries N-linked (GlcNAc...) asparagine glycosylation. Residues 375–395 (VLAPLCLYVVVGVSLLLAGII) form a helical membrane-spanning segment. The Cytoplasmic segment spans residues 396–420 (SLNRVRIEIPLEKENQDKLVKFMIR). The chain crosses the membrane as a helical span at residues 421–441 (IGVFSILYLVPLLVVIGCYFY). Residues 442-477 (EQAYRGIWETTWIQERCREYHIPCPYQVTQMSRPDL) lie on the Extracellular side of the membrane. Residues 478-498 (ILFLMKYLMALIVGIPSVFWV) traverse the membrane as a helical segment. Topologically, residues 499 to 666 (GSKKTCFEWA…RVIEEDGTSA (168 aa)) are cytoplasmic. The short motif at 502–507 (KTCFEW) is the Lys-Thr-X-X-X-Trp motif, mediates interaction with the PDZ domain of Dvl family members element. Residues 538 to 666 (RDPNTPIIRK…RVIEEDGTSA (129 aa)) are disordered. The segment covering 550 to 565 (GTSTQGTSTHASSTQL) has biased composition (polar residues). Residues 617 to 638 (LTDHSRHSSSHRLNEQSRHSSI) show a composition bias toward basic and acidic residues. Positions 639–656 (RDLSNNPMTHITHGTSMN) are enriched in polar residues.

Belongs to the G-protein coupled receptor Fz/Smo family. Interacts with VANGL2. In terms of processing, ubiquitinated by ZNRF3, leading to its degradation by the proteasome. In terms of tissue distribution, widely expressed. Relatively high expression in the CNS, including regions of the limbic system, in kidney, pancreas, skeletal muscle, uterus and testis.

It localises to the membrane. The protein localises to the cell membrane. It is found in the cell surface. Its subcellular location is the apical cell membrane. In terms of biological role, receptor for Wnt proteins. Most of frizzled receptors are coupled to the beta-catenin canonical signaling pathway, which leads to the activation of disheveled proteins, inhibition of GSK-3 kinase, nuclear accumulation of beta-catenin and activation of Wnt target genes. A second signaling pathway involving PKC and calcium fluxes has been seen for some family members, but it is not yet clear if it represents a distinct pathway or if it can be integrated in the canonical pathway, as PKC seems to be required for Wnt-mediated inactivation of GSK-3 kinase. Both pathways seem to involve interactions with G-proteins. Activation by Wnt5A stimulates PKC activity via a G-protein-dependent mechanism. Involved in transduction and intercellular transmission of polarity information during tissue morphogenesis and/or in differentiated tissues. Plays a role in controlling early axon growth and guidance processes necessary for the formation of a subset of central and peripheral major fiber tracts. Required for the development of major fiber tracts in the central nervous system, including: the anterior commissure, the corpus callosum, the thalamocortical, corticothalamic and nigrostriatal tracts, the corticospinal tract, the fasciculus retroflexus, the mammillothalamic tract, the medial lemniscus, and ascending fiber tracts from the spinal cord to the brain. In the peripheral nervous system, controls axon growth in distinct populations of cranial and spinal motor neurons, including the facial branchimotor nerve, the hypoglossal nerve, the phrenic nerve, and motor nerves innervating dorsal limbs. Involved in the migration of cranial neural crest cells. May also be implicated in the transmission of sensory information from the trunk and limbs to the brain. Controls commissural sensory axons guidance after midline crossing along the anterior-posterior axis in the developing spinal cord in a Wnt-dependent signaling pathway. Together with FZD6, is involved in the neural tube closure and plays a role in the regulation of the establishment of planar cell polarity (PCP), particularly in the orientation of asymmetric bundles of stereocilia on the apical faces of a subset of auditory and vestibular sensory cells located in the inner ear. Promotes neurogenesis by maintaining sympathetic neuroblasts within the cell cycle in a beta-catenin-dependent manner. This chain is Frizzled-3 (FZD3), found in Homo sapiens (Human).